The sequence spans 111 residues: Small ribosomal subunit protein bS16 (111 aa).

Residues 92–111 form a disordered region; that stretch reads MEVKAKNRKARPSKKEDKEA.

Belongs to the bacterial ribosomal protein bS16 family.

The sequence is that of Small ribosomal subunit protein bS16 from Rickettsia massiliae (strain Mtu5).